Consider the following 232-residue polypeptide: Octanoyltransferase (232 aa).

One can recognise a BPL/LPL catalytic domain in the interval 44-219; that stretch reads EYTADEIWVV…QLARQFGLVL (176 aa). Substrate-binding positions include 83-90, 150-152, and 163-165; these read RGGQVTYH, ALG, and GLS. Residue Cys181 is the Acyl-thioester intermediate of the active site.

This sequence belongs to the LipB family.

It is found in the cytoplasm. The catalysed reaction is octanoyl-[ACP] + L-lysyl-[protein] = N(6)-octanoyl-L-lysyl-[protein] + holo-[ACP] + H(+). It functions in the pathway protein modification; protein lipoylation via endogenous pathway; protein N(6)-(lipoyl)lysine from octanoyl-[acyl-carrier-protein]: step 1/2. Functionally, catalyzes the transfer of endogenously produced octanoic acid from octanoyl-acyl-carrier-protein onto the lipoyl domains of lipoate-dependent enzymes. Lipoyl-ACP can also act as a substrate although octanoyl-ACP is likely to be the physiological substrate. The polypeptide is Octanoyltransferase (Xanthomonas axonopodis pv. citri (strain 306)).